Reading from the N-terminus, the 172-residue chain is Co-chaperone protein HscB homolog (172 aa).

The region spanning 2 to 69 is the J domain; the sequence is NHFELFNLPV…DSRAAYLLAL (68 aa).

Belongs to the HscB family. In terms of assembly, interacts with HscA and stimulates its ATPase activity.

Co-chaperone involved in the maturation of iron-sulfur cluster-containing proteins. Seems to help targeting proteins to be folded toward HscA. The polypeptide is Co-chaperone protein HscB homolog (Acinetobacter baumannii (strain SDF)).